A 123-amino-acid chain; its full sequence is Large ribosomal subunit protein uL29 (123 aa).

Belongs to the universal ribosomal protein uL29 family.

The polypeptide is Large ribosomal subunit protein uL29 (rpl-35) (Caenorhabditis elegans).